The chain runs to 468 residues: Probable citrate synthase, mitochondrial (468 aa).

Catalysis depends on residues His303, His349, and Asp404.

This sequence belongs to the citrate synthase family. Homodimer.

Its subcellular location is the mitochondrion matrix. The catalysed reaction is oxaloacetate + acetyl-CoA + H2O = citrate + CoA + H(+). Its pathway is carbohydrate metabolism; tricarboxylic acid cycle; isocitrate from oxaloacetate: step 1/2. In Caenorhabditis briggsae, this protein is Probable citrate synthase, mitochondrial (cts-1).